The chain runs to 217 residues: Ribonuclease T (217 aa).

One can recognise an Exonuclease domain in the interval 20–194 (VVIDVETGGF…YDTDRTAELF (175 aa)). The Mg(2+) site is built by aspartate 23, glutamate 25, histidine 181, and aspartate 186. Residue histidine 181 is the Proton donor/acceptor of the active site.

It belongs to the RNase T family. In terms of assembly, homodimer. The cofactor is Mg(2+).

In terms of biological role, trims short 3' overhangs of a variety of RNA species, leaving a one or two nucleotide 3' overhang. Responsible for the end-turnover of tRNA: specifically removes the terminal AMP residue from uncharged tRNA (tRNA-C-C-A). Also appears to be involved in tRNA biosynthesis. The sequence is that of Ribonuclease T from Photorhabdus laumondii subsp. laumondii (strain DSM 15139 / CIP 105565 / TT01) (Photorhabdus luminescens subsp. laumondii).